The sequence spans 144 residues: Ig heavy chain V region MOPC 141 (144 aa).

Positions 1 to 19 (MAVLALLFCLATFPSCILS) are cleaved as a signal peptide. The Ig-like domain maps to 20 to 130 (QVQLKESGPG…YYGRSDKYFT (111 aa)).

In Mus musculus (Mouse), this protein is Ig heavy chain V region MOPC 141.